Reading from the N-terminus, the 300-residue chain is Ubiquitin thioesterase otu2 (300 aa).

2 disordered regions span residues 23–73 (RKQL…QQED) and 89–141 (TAEK…SEKM). Residues 48 to 61 (LSQKHATERQKLDK) show a composition bias toward basic and acidic residues. Positions 62 to 71 (GDEETNETQQ) are enriched in acidic residues. Positions 89-109 (TAEKSSVQSSLNTKENTPQQP) are enriched in polar residues. The segment covering 115 to 141 (RQKERLERRKAEMKKMSEQAELESEKM) has biased composition (basic and acidic residues). One can recognise an OTU domain in the interval 161 to 298 (LVAVDIPADG…GAHYNSLLYR (138 aa)).

It localises to the cytoplasm. The catalysed reaction is Thiol-dependent hydrolysis of ester, thioester, amide, peptide and isopeptide bonds formed by the C-terminal Gly of ubiquitin (a 76-residue protein attached to proteins as an intracellular targeting signal).. Functionally, hydrolase that can remove conjugated ubiquitin from proteins and may therefore play an important regulatory role at the level of protein turnover by preventing degradation. The sequence is that of Ubiquitin thioesterase otu2 (otu2) from Schizosaccharomyces pombe (strain 972 / ATCC 24843) (Fission yeast).